The sequence spans 205 residues: Small ribosomal subunit protein uS4 (205 aa).

Residues 20–47 (WGRSKSPLNRGKENPPGQHGQRRKKPSD) are disordered. One can recognise an S4 RNA-binding domain in the interval 94–154 (CRLDAVVYRL…TKSKDMALIL (61 aa)).

This sequence belongs to the universal ribosomal protein uS4 family. In terms of assembly, part of the 30S ribosomal subunit. Contacts protein S5. The interaction surface between S4 and S5 is involved in control of translational fidelity.

In terms of biological role, one of the primary rRNA binding proteins, it binds directly to 16S rRNA where it nucleates assembly of the body of the 30S subunit. With S5 and S12 plays an important role in translational accuracy. This is Small ribosomal subunit protein uS4 from Paramagnetospirillum magneticum (strain ATCC 700264 / AMB-1) (Magnetospirillum magneticum).